The primary structure comprises 194 residues: Large ribosomal subunit protein uL22 (194 aa).

The protein belongs to the universal ribosomal protein uL22 family.

The protein is Large ribosomal subunit protein uL22 (rpl17) of Aspergillus fumigatus (strain ATCC MYA-4609 / CBS 101355 / FGSC A1100 / Af293) (Neosartorya fumigata).